We begin with the raw amino-acid sequence, 320 residues long: Biotin synthase (320 aa).

One can recognise a Radical SAM core domain in the interval 46–275 (NMGRRVDLCS…YAHIRYAGGR (230 aa)). Residues cysteine 64, cysteine 68, and cysteine 71 each coordinate [4Fe-4S] cluster. [2Fe-2S] cluster contacts are provided by serine 108, cysteine 140, cysteine 200, and arginine 270.

It belongs to the radical SAM superfamily. Biotin synthase family. As to quaternary structure, homodimer. [4Fe-4S] cluster serves as cofactor. It depends on [2Fe-2S] cluster as a cofactor.

The enzyme catalyses (4R,5S)-dethiobiotin + (sulfur carrier)-SH + 2 reduced [2Fe-2S]-[ferredoxin] + 2 S-adenosyl-L-methionine = (sulfur carrier)-H + biotin + 2 5'-deoxyadenosine + 2 L-methionine + 2 oxidized [2Fe-2S]-[ferredoxin]. The protein operates within cofactor biosynthesis; biotin biosynthesis; biotin from 7,8-diaminononanoate: step 2/2. Its function is as follows. Catalyzes the conversion of dethiobiotin (DTB) to biotin by the insertion of a sulfur atom into dethiobiotin via a radical-based mechanism. In Acetivibrio thermocellus (strain ATCC 27405 / DSM 1237 / JCM 9322 / NBRC 103400 / NCIMB 10682 / NRRL B-4536 / VPI 7372) (Clostridium thermocellum), this protein is Biotin synthase.